The following is a 183-amino-acid chain: uncharacterized protein (183 aa).

Residues 54–89 (DAASQSDPLPGGDGLTGGDSKATRRTSPRYYPPSEA) are disordered.

This is an uncharacterized protein from Human cytomegalovirus (strain AD169) (HHV-5).